The following is a 282-amino-acid chain: uncharacterized protein (282 aa).

2 disordered regions span residues 1 to 45 (MPLE…EEDE) and 201 to 259 (DRRR…KPWG). Positions 10 to 19 (SEMKEFKEST) are enriched in basic and acidic residues. The segment covering 26-38 (SVSSEETLTQSMV) has biased composition (polar residues). The segment covering 201-237 (DRRRKEDSKARSRLTRREEHSEHHRSGKSRRERERRS) has biased composition (basic and acidic residues).

This is an uncharacterized protein from Ostreid herpesvirus 1 (isolate France) (OsHV-1).